Here is a 103-residue protein sequence, read N- to C-terminus: Mitochondrial import inner membrane translocase subunit Tim10 B (103 aa).

The Twin CX3C motif motif lies at 28–52; that stretch reads CFQRCVPSLHHRALDAEEEACLHSC. Disulfide bonds link Cys-28–Cys-52 and Cys-32–Cys-48.

It belongs to the small Tim family. In terms of assembly, component of the TIM22 complex, which core is composed of TIMM22, associated with TIMM10 (TIMM10A and/or TIMM10B), TIMM9, AGK and TIMM29. As to expression, ubiquitous, with highest expression in heart, kidney, liver and skeletal muscle.

It is found in the mitochondrion inner membrane. Functionally, component of the TIM22 complex, a complex that mediates the import and insertion of multi-pass transmembrane proteins into the mitochondrial inner membrane. The TIM22 complex forms a twin-pore translocase that uses the membrane potential as the external driving force. In the TIM22 complex, it may act as a docking point for the soluble 70 kDa complex that guides the target proteins in transit through the aqueous mitochondrial intermembrane space. In Homo sapiens (Human), this protein is Mitochondrial import inner membrane translocase subunit Tim10 B (TIMM10B).